The sequence spans 712 residues: Ribosomal RNA large subunit methyltransferase K/L (712 aa).

The region spanning 46-157 (GAYQALLHSR…RENMVVSLDL (112 aa)) is the THUMP domain.

The protein belongs to the methyltransferase superfamily. RlmKL family.

Its subcellular location is the cytoplasm. The catalysed reaction is guanosine(2445) in 23S rRNA + S-adenosyl-L-methionine = N(2)-methylguanosine(2445) in 23S rRNA + S-adenosyl-L-homocysteine + H(+). It carries out the reaction guanosine(2069) in 23S rRNA + S-adenosyl-L-methionine = N(2)-methylguanosine(2069) in 23S rRNA + S-adenosyl-L-homocysteine + H(+). In terms of biological role, specifically methylates the guanine in position 2445 (m2G2445) and the guanine in position 2069 (m7G2069) of 23S rRNA. This is Ribosomal RNA large subunit methyltransferase K/L from Actinobacillus pleuropneumoniae serotype 3 (strain JL03).